The chain runs to 475 residues: Dihydrolipoyl dehydrogenase (475 aa).

Residues 36–45 (ERYSTLGGVC), K54, and G117 each bind FAD. C45 and C50 are oxidised to a cystine. NAD(+)-binding positions include 182 to 186 (GGGII), E205, V238, and 270 to 273 (AIGR). FAD-binding residues include D313 and A321. H445 acts as the Proton acceptor in catalysis.

Belongs to the class-I pyridine nucleotide-disulfide oxidoreductase family. FAD is required as a cofactor.

The protein localises to the cytoplasm. It carries out the reaction N(6)-[(R)-dihydrolipoyl]-L-lysyl-[protein] + NAD(+) = N(6)-[(R)-lipoyl]-L-lysyl-[protein] + NADH + H(+). In terms of biological role, the branched-chain alpha-keto dehydrogenase complex catalyzes the overall conversion of alpha-keto acids to acyl-CoA and CO(2). It contains multiple copies of 3 enzymatic components: branched-chain alpha-keto acid decarboxylase (E1), lipoamide acyltransferase (E2) and lipoamide dehydrogenase (E3). The protein is Dihydrolipoyl dehydrogenase (lpd) of Vibrio parahaemolyticus serotype O3:K6 (strain RIMD 2210633).